The chain runs to 261 residues: Cytochrome c oxidase subunit 3 (261 aa).

At 1 to 15 (MTHQTHAYHMVNPSP) the chain is on the mitochondrial matrix side. The helical transmembrane segment at 16 to 34 (WPLTGALSALLMTSGLVMW) threads the bilayer. Over 35-40 (FHYNST) the chain is Mitochondrial intermembrane. A helical membrane pass occupies residues 41–66 (LLLTLGLTTNLLTMYQWWRDIIREST). Residues 67–72 (FQGHHT) lie on the Mitochondrial matrix side of the membrane. The chain crosses the membrane as a helical span at residues 73 to 105 (PAVQKGLRYGMILFIISEVFFFSGFFWAFYHSS). The Mitochondrial intermembrane segment spans residues 106–128 (LAPTPELGGCWPPTGIHPLNPME). A helical membrane pass occupies residues 129–152 (VPLLNTSVLLASGVSITWAHHSLM). Topologically, residues 153–155 (EGN) are mitochondrial matrix. The helical transmembrane segment at 156 to 183 (RKHMLQALFITISLGIYFTLLQASEYYE) threads the bilayer. Topologically, residues 184 to 190 (APFTISD) are mitochondrial intermembrane. A helical transmembrane segment spans residues 191–223 (GVYGSTFFVATGFHGLHVIIGSTFLIVCFLRQL). The Mitochondrial matrix portion of the chain corresponds to 224 to 232 (KFHFTSNHH). Residues 233 to 256 (FGFEAAAWYWHFVDVVWLFLYVSI) form a helical membrane-spanning segment. Residues 257 to 261 (YWWGS) are Mitochondrial intermembrane-facing.

The protein belongs to the cytochrome c oxidase subunit 3 family. Component of the cytochrome c oxidase (complex IV, CIV), a multisubunit enzyme composed of 14 subunits. The complex is composed of a catalytic core of 3 subunits MT-CO1, MT-CO2 and MT-CO3, encoded in the mitochondrial DNA, and 11 supernumerary subunits COX4I, COX5A, COX5B, COX6A, COX6B, COX6C, COX7A, COX7B, COX7C, COX8 and NDUFA4, which are encoded in the nuclear genome. The complex exists as a monomer or a dimer and forms supercomplexes (SCs) in the inner mitochondrial membrane with NADH-ubiquinone oxidoreductase (complex I, CI) and ubiquinol-cytochrome c oxidoreductase (cytochrome b-c1 complex, complex III, CIII), resulting in different assemblies (supercomplex SCI(1)III(2)IV(1) and megacomplex MCI(2)III(2)IV(2)).

The protein localises to the mitochondrion inner membrane. The catalysed reaction is 4 Fe(II)-[cytochrome c] + O2 + 8 H(+)(in) = 4 Fe(III)-[cytochrome c] + 2 H2O + 4 H(+)(out). In terms of biological role, component of the cytochrome c oxidase, the last enzyme in the mitochondrial electron transport chain which drives oxidative phosphorylation. The respiratory chain contains 3 multisubunit complexes succinate dehydrogenase (complex II, CII), ubiquinol-cytochrome c oxidoreductase (cytochrome b-c1 complex, complex III, CIII) and cytochrome c oxidase (complex IV, CIV), that cooperate to transfer electrons derived from NADH and succinate to molecular oxygen, creating an electrochemical gradient over the inner membrane that drives transmembrane transport and the ATP synthase. Cytochrome c oxidase is the component of the respiratory chain that catalyzes the reduction of oxygen to water. Electrons originating from reduced cytochrome c in the intermembrane space (IMS) are transferred via the dinuclear copper A center (CU(A)) of subunit 2 and heme A of subunit 1 to the active site in subunit 1, a binuclear center (BNC) formed by heme A3 and copper B (CU(B)). The BNC reduces molecular oxygen to 2 water molecules using 4 electrons from cytochrome c in the IMS and 4 protons from the mitochondrial matrix. The protein is Cytochrome c oxidase subunit 3 (MT-CO3) of Rhinoceros unicornis (Greater Indian rhinoceros).